The primary structure comprises 414 residues: Glucose-1-phosphate adenylyltransferase (414 aa).

Residues glycine 164, 181–182 (EK), and serine 199 each bind alpha-D-glucose 1-phosphate.

It belongs to the bacterial/plant glucose-1-phosphate adenylyltransferase family. Homotetramer.

The catalysed reaction is alpha-D-glucose 1-phosphate + ATP + H(+) = ADP-alpha-D-glucose + diphosphate. The protein operates within glycan biosynthesis; glycogen biosynthesis. Functionally, involved in the biosynthesis of ADP-glucose, a building block required for the elongation reactions to produce glycogen. Catalyzes the reaction between ATP and alpha-D-glucose 1-phosphate (G1P) to produce pyrophosphate and ADP-Glc. The chain is Glucose-1-phosphate adenylyltransferase from Kocuria rhizophila (strain ATCC 9341 / DSM 348 / NBRC 103217 / DC2201).